Consider the following 407-residue polypeptide: Arginine biosynthesis bifunctional protein ArgJ (407 aa).

Threonine 155, lysine 181, threonine 192, glutamate 278, asparagine 402, and threonine 407 together coordinate substrate. Threonine 192 serves as the catalytic Nucleophile.

It belongs to the ArgJ family. In terms of assembly, heterotetramer of two alpha and two beta chains.

The protein resides in the cytoplasm. It carries out the reaction N(2)-acetyl-L-ornithine + L-glutamate = N-acetyl-L-glutamate + L-ornithine. The catalysed reaction is L-glutamate + acetyl-CoA = N-acetyl-L-glutamate + CoA + H(+). Its pathway is amino-acid biosynthesis; L-arginine biosynthesis; L-ornithine and N-acetyl-L-glutamate from L-glutamate and N(2)-acetyl-L-ornithine (cyclic): step 1/1. It functions in the pathway amino-acid biosynthesis; L-arginine biosynthesis; N(2)-acetyl-L-ornithine from L-glutamate: step 1/4. Catalyzes two activities which are involved in the cyclic version of arginine biosynthesis: the synthesis of N-acetylglutamate from glutamate and acetyl-CoA as the acetyl donor, and of ornithine by transacetylation between N(2)-acetylornithine and glutamate. This Thiobacillus denitrificans (strain ATCC 25259 / T1) protein is Arginine biosynthesis bifunctional protein ArgJ.